The sequence spans 56 residues: Large ribosomal subunit protein eL37 (56 aa).

Zn(2+) contacts are provided by cysteine 19, cysteine 22, cysteine 34, and cysteine 37. A C4-type zinc finger spans residues 19 to 37 (CRRCGRLSYNFNRKTCVAC).

This sequence belongs to the eukaryotic ribosomal protein eL37 family. It depends on Zn(2+) as a cofactor.

Functionally, binds to the 23S rRNA. The chain is Large ribosomal subunit protein eL37 from Methanothrix thermoacetophila (strain DSM 6194 / JCM 14653 / NBRC 101360 / PT) (Methanosaeta thermophila).